The chain runs to 131 residues: Putative superoxide reductase (131 aa).

Fe cation-binding residues include Glu-15, His-17, His-45, His-51, Cys-115, and His-118.

This sequence belongs to the desulfoferrodoxin family. Fe cation serves as cofactor.

The catalysed reaction is reduced [rubredoxin] + superoxide + 2 H(+) = oxidized [rubredoxin] + H2O2. Its function is as follows. Uses electrons from reduced NADP, by way of rubredoxin and an oxidoreductase, to catalyze the reduction of superoxide to hydrogen peroxide. The chain is Putative superoxide reductase from Thermotoga maritima (strain ATCC 43589 / DSM 3109 / JCM 10099 / NBRC 100826 / MSB8).